The primary structure comprises 431 residues: tRNA(Ile)-lysidine synthase (431 aa).

19-24 is an ATP binding site; the sequence is STGIDS.

This sequence belongs to the tRNA(Ile)-lysidine synthase family.

It localises to the cytoplasm. The enzyme catalyses cytidine(34) in tRNA(Ile2) + L-lysine + ATP = lysidine(34) in tRNA(Ile2) + AMP + diphosphate + H(+). Ligates lysine onto the cytidine present at position 34 of the AUA codon-specific tRNA(Ile) that contains the anticodon CAU, in an ATP-dependent manner. Cytidine is converted to lysidine, thus changing the amino acid specificity of the tRNA from methionine to isoleucine. This is tRNA(Ile)-lysidine synthase from Staphylococcus aureus (strain MW2).